Here is a 466-residue protein sequence, read N- to C-terminus: Tubulointerstitial nephritis antigen-like (466 aa).

The signal sequence occupies residues 1 to 21 (MWGCWLGLLLLLLAGQAALEA). Residues 49 to 96 (EQDMCCRGRADECALPYLGATCYCDLFCNRTVSDCCPDFWDFCLGIPP) enclose the SMB domain. Disulfide bonds link C53-C72, C70-C72, C70-C84, C76-C83, and C84-C91. N77 carries an N-linked (GlcNAc...) asparagine glycan. N160 is a glycosylation site (N-linked (GlcNAc...) asparagine).

Belongs to the peptidase C1 family. In terms of processing, glycosylated. Highly expressed in kidney, heart and adrenocortical cells of adrenal glands. Moderately expressed in spleen and liver. Also found in prostate, seminal vesicle, epididymis and testis in male reproductive organs. In adrenal glands is found in the outer cortical regions corresponding to the zona glomerulosa (zG) and the undifferentiated cell zone (zU) (at protein level).

The protein resides in the secreted. Its function is as follows. May be implicated in the adrenocortical zonation and in mechanisms for repressing the CYP11B1 gene expression in adrenocortical cells. This is a non catalytic peptidase C1 family protein. The sequence is that of Tubulointerstitial nephritis antigen-like (Tinagl1) from Mus musculus (Mouse).